Here is a 55-residue protein sequence, read N- to C-terminus: Neurotoxin BmKX-A1-S31 (55 aa).

The signal sequence occupies residues 1 to 23; the sequence is MKIFFAVLVILVLFSMLIWTAYG. 3 cysteine pairs are disulfide-bonded: Cys-30–Cys-45, Cys-36–Cys-50, and Cys-39–Cys-53.

Expressed by the venom gland.

The protein localises to the secreted. This Olivierus martensii (Manchurian scorpion) protein is Neurotoxin BmKX-A1-S31.